Here is a 217-residue protein sequence, read N- to C-terminus: Small ribosomal subunit protein uS3 (217 aa).

The region spanning 38–106 (IRKFLKKRLS…KVTLDIQEVR (69 aa)) is the KH type-2 domain.

It belongs to the universal ribosomal protein uS3 family. As to quaternary structure, part of the 30S ribosomal subunit. Forms a tight complex with proteins S10 and S14.

Binds the lower part of the 30S subunit head. Binds mRNA in the 70S ribosome, positioning it for translation. The polypeptide is Small ribosomal subunit protein uS3 (Desulfotalea psychrophila (strain LSv54 / DSM 12343)).